The sequence spans 481 residues: Probable autolysin LytO (481 aa).

Residues lysine 7–arginine 148 form the Peptidase C51 domain. Positions threonine 155–glutamine 165 are enriched in polar residues. Residues threonine 155–lysine 177 are disordered. In terms of domain architecture, N-acetylmuramoyl-L-alanine amidase spans serine 198–histidine 323. In terms of domain architecture, SH3b spans glutamate 398–serine 466.

The protein belongs to the N-acetylmuramoyl-L-alanine amidase 2 family.

It catalyses the reaction Hydrolyzes the link between N-acetylmuramoyl residues and L-amino acid residues in certain cell-wall glycopeptides.. Its function is as follows. Has weak lytic activity toward S.aureus cells. The chain is Probable autolysin LytO from Staphylococcus aureus (strain NCTC 8325 / PS 47).